We begin with the raw amino-acid sequence, 229 residues long: Large ribosomal subunit protein uL1 (229 aa).

The protein belongs to the universal ribosomal protein uL1 family. In terms of assembly, part of the 50S ribosomal subunit.

Functionally, binds directly to 23S rRNA. The L1 stalk is quite mobile in the ribosome, and is involved in E site tRNA release. Protein L1 is also a translational repressor protein, it controls the translation of the L11 operon by binding to its mRNA. This is Large ribosomal subunit protein uL1 from Streptococcus pyogenes serotype M1.